Here is a 159-residue protein sequence, read N- to C-terminus: U1 small nuclear ribonucleoprotein C (159 aa).

Residues 4–36 (FYCDYCDTYLTHDSPSVRKTHCSGRKHKENVKD) form a Matrin-type zinc finger. 2 disordered regions span residues 63-95 (PPTP…MPAP) and 139-159 (MRPP…RPDR). Residues 77–95 (IPPPPSMGGPPRPGMMPAP) are compositionally biased toward pro residues.

The protein belongs to the U1 small nuclear ribonucleoprotein C family. As to quaternary structure, component of the U1 snRNP. The U1 snRNP is composed of the U1 snRNA and the 7 core Sm proteins snrpb, snrpd1, snrpd2, snrpd3, snrpe, snrpf and snrpg that assemble in a heptameric protein ring on the Sm site of the small nuclear RNA to form the core snRNP, and at least 3 U1 snRNP-specific proteins snrnp70/U1-70K, snrpa/U1-A and snrpc/U1-C. snrpc/U1-C interacts with U1 snRNA and the 5' splice-site region of the pre-mRNA.

It is found in the nucleus. In terms of biological role, component of the spliceosomal U1 snRNP, which is essential for recognition of the pre-mRNA 5' splice-site and the subsequent assembly of the spliceosome. snrpc/U1-C is directly involved in initial 5' splice-site recognition for both constitutive and regulated alternative splicing. The interaction with the 5' splice-site seems to precede base-pairing between the pre-mRNA and the U1 snRNA. Stimulates commitment or early (E) complex formation by stabilizing the base pairing of the 5' end of the U1 snRNA and the 5' splice-site region. The polypeptide is U1 small nuclear ribonucleoprotein C (Xenopus tropicalis (Western clawed frog)).